Reading from the N-terminus, the 158-residue chain is Small ribosomal subunit protein uS9 (158 aa).

Positions 1–20 are enriched in polar residues; sequence MSETMQSLDQLSALKTTQPD. Residues 1 to 29 form a disordered region; the sequence is MSETMQSLDQLSALKTTQPDAPTYTKKVD.

Belongs to the universal ribosomal protein uS9 family.

The sequence is that of Small ribosomal subunit protein uS9 from Rhodopseudomonas palustris (strain BisB5).